The sequence spans 416 residues: Glutamyl-tRNA reductase (416 aa).

Residues 49–52, Ser105, 110–112, and Gln116 contribute to the substrate site; these read TCNR and EPQ. The active-site Nucleophile is Cys50. 185–190 is a binding site for NADP(+); sequence GAGETI.

This sequence belongs to the glutamyl-tRNA reductase family. In terms of assembly, homodimer.

It catalyses the reaction (S)-4-amino-5-oxopentanoate + tRNA(Glu) + NADP(+) = L-glutamyl-tRNA(Glu) + NADPH + H(+). It functions in the pathway porphyrin-containing compound metabolism; protoporphyrin-IX biosynthesis; 5-aminolevulinate from L-glutamyl-tRNA(Glu): step 1/2. Its function is as follows. Catalyzes the NADPH-dependent reduction of glutamyl-tRNA(Glu) to glutamate 1-semialdehyde (GSA). The polypeptide is Glutamyl-tRNA reductase (Shewanella frigidimarina (strain NCIMB 400)).